Reading from the N-terminus, the 522-residue chain is Cytochrome P450 26C1 (522 aa).

A helical membrane pass occupies residues 9 to 29; the sequence is LSVLGAAGTALLCAGLLLSLA. Residue C459 coordinates heme.

It belongs to the cytochrome P450 family. It depends on heme as a cofactor. As to expression, detected in most tissues at very low level.

It is found in the membrane. It catalyses the reaction an organic molecule + reduced [NADPH--hemoprotein reductase] + O2 = an alcohol + oxidized [NADPH--hemoprotein reductase] + H2O + H(+). The catalysed reaction is all-trans-retinoate + reduced [NADPH--hemoprotein reductase] + O2 = all-trans-4-hydroxyretinoate + oxidized [NADPH--hemoprotein reductase] + H2O + H(+). The enzyme catalyses all-trans-4-hydroxyretinoate + reduced [NADPH--hemoprotein reductase] + O2 = all-trans-4-oxoretinoate + oxidized [NADPH--hemoprotein reductase] + 2 H2O + H(+). It carries out the reaction 9-cis-retinoate + reduced [NADPH--hemoprotein reductase] + O2 = 9-cis-4-hydroxyretinoate + oxidized [NADPH--hemoprotein reductase] + H2O + H(+). It catalyses the reaction 9-cis-4-hydroxyretinoate + reduced [NADPH--hemoprotein reductase] + O2 = 9-cis-4-oxoretinoate + oxidized [NADPH--hemoprotein reductase] + 2 H2O + H(+). The catalysed reaction is all-trans-4-hydroxy-13,14-dihydroretinoate + reduced [NADPH--hemoprotein reductase] + O2 = all-trans-4-oxo-13,14-dihydroretinoate + oxidized [NADPH--hemoprotein reductase] + 2 H2O + H(+). The enzyme catalyses all-trans-13,14-dihydroretinoate + reduced [NADPH--hemoprotein reductase] + O2 = all-trans-4-hydroxy-13,14-dihydroretinoate + oxidized [NADPH--hemoprotein reductase] + H2O + H(+). In terms of biological role, a cytochrome P450 monooxygenase involved in the metabolism of retinoates (RAs), the active metabolites of vitamin A, and critical signaling molecules in animals. RAs exist as at least four different isomers: all-trans-RA (atRA), 9-cis-RA, 13-cis-RA, and 9,13-dicis-RA, where atRA is considered to be the biologically active isomer, although 9-cis-RA and 13-cis-RA also have activity. Catalyzes the oxidation of atRA primarily at C-4. Oxidation of atRA limits its biological activity and initiates a degradative process leading to its eventual elimination, thereby contributes to the regulation of atRA homeostasis and signaling. Able to metabolize other RAs such as 9-cis with high efficiency. Can oxidize all-trans-13,14-dihydroretinoate (DRA) to metabolites which could include all-trans-4-oxo-DRA, all-trans-4-hydroxy-DRA, all-trans-5,8-epoxy-DRA, and all-trans-18-hydroxy-DRA. Shares sequence similarity with other CYP26 family members, but has higher affinity to 9-cis-RA and is much less sensitive to the inhibitory effects of ketoconazole. In cooperation with Cyp26a1, contributes to the CNS patterning and the development of regions of higher visual acuity. This is Cytochrome P450 26C1 (CYP26C1) from Homo sapiens (Human).